Consider the following 252-residue polypeptide: Large ribosomal subunit protein uL4 (252 aa).

Belongs to the universal ribosomal protein uL4 family. As to quaternary structure, part of the 50S ribosomal subunit.

Functionally, one of the primary rRNA binding proteins, this protein initially binds near the 5'-end of the 23S rRNA. It is important during the early stages of 50S assembly. It makes multiple contacts with different domains of the 23S rRNA in the assembled 50S subunit and ribosome. Forms part of the polypeptide exit tunnel. This is Large ribosomal subunit protein uL4 from Methanococcus maripaludis (strain C7 / ATCC BAA-1331).